The chain runs to 286 residues: Bifunctional protein FolD (286 aa).

NADP(+) is bound by residues 165-167 and S190; that span reads GRS.

This sequence belongs to the tetrahydrofolate dehydrogenase/cyclohydrolase family. Homodimer.

It catalyses the reaction (6R)-5,10-methylene-5,6,7,8-tetrahydrofolate + NADP(+) = (6R)-5,10-methenyltetrahydrofolate + NADPH. The enzyme catalyses (6R)-5,10-methenyltetrahydrofolate + H2O = (6R)-10-formyltetrahydrofolate + H(+). It functions in the pathway one-carbon metabolism; tetrahydrofolate interconversion. Its function is as follows. Catalyzes the oxidation of 5,10-methylenetetrahydrofolate to 5,10-methenyltetrahydrofolate and then the hydrolysis of 5,10-methenyltetrahydrofolate to 10-formyltetrahydrofolate. The sequence is that of Bifunctional protein FolD from Burkholderia lata (strain ATCC 17760 / DSM 23089 / LMG 22485 / NCIMB 9086 / R18194 / 383).